The following is a 323-amino-acid chain: Prenyl transferase (323 aa).

Residues lysine 46, arginine 49, and histidine 81 each coordinate isopentenyl diphosphate. Mg(2+) is bound by residues aspartate 88 and aspartate 92. Residue arginine 97 coordinates an all-trans-polyprenyl diphosphate. Residue arginine 98 coordinates isopentenyl diphosphate. An all-trans-polyprenyl diphosphate is bound by residues lysine 174, threonine 175, and glutamine 212.

Belongs to the FPP/GGPP synthase family. It depends on Mg(2+) as a cofactor.

Its subcellular location is the plastid. The protein localises to the chloroplast. Its function is as follows. Possible role in synthesis of the nonaprenyl side chain of plastoquinone or in synthesis of other prenyl chains such as undekaprenyl pyrophosphate. The sequence is that of Prenyl transferase (preA) from Cyanidium caldarium (Red alga).